A 168-amino-acid chain; its full sequence is MATATYPPPPPYYRLYKDYSENPNSAPEPPPPIEGTYVCFGGNYTTEDVLPSLEEQGVPQLYPKDSNLDYKNELRSLNRELQLHILELADVLVDRPSQYAKRIGEISSIFKNLHHLLNSLRPHQARATLIHIMELQIQQRKQAVEDIKRRREEAQRLLKDAYLTLDGQ.

Coiled-coil stretches lie at residues 64–92 (KDSN…ADVL) and 132–166 (IMEL…LTLD).

This sequence belongs to the Mediator complex subunit 7 family. As to quaternary structure, component of the Mediator complex. Interacts with MEE14/CBP1.

It localises to the nucleus. In terms of biological role, component of the Mediator complex, a coactivator involved in the regulated transcription of nearly all RNA polymerase II-dependent genes. Mediator functions as a bridge to convey information from gene-specific regulatory proteins to the basal RNA polymerase II transcription machinery. The Mediator complex, having a compact conformation in its free form, is recruited to promoters by direct interactions with regulatory proteins and serves for the assembly of a functional pre-initiation complex with RNA polymerase II and the general transcription factors. This Arabidopsis thaliana (Mouse-ear cress) protein is Mediator of RNA polymerase II transcription subunit 7a (MED7A).